The primary structure comprises 581 residues: Frizzled-8 (581 aa).

Residues 1 to 23 (MESLSLSLLLLVSWLQGSQCAAA) form the signal peptide. The region spanning 24 to 144 (KELSCQEITV…GNPDTLCMDY (121 aa)) is the FZ domain. Residues 24-239 (KELSCQEITV…PEERTFTEFW (216 aa)) lie on the Extracellular side of the membrane. Disulfide bonds link Cys-28-Cys-89, Cys-36-Cys-82, Cys-73-Cys-111, Cys-100-Cys-141, and Cys-104-Cys-128. The N-linked (GlcNAc...) asparagine glycan is linked to Asn-42. 64–71 (QFWPLVVI) is a hexadecanoate binding site. The segment at 88–93 (ICLEDY) is wnt-binding. The interval 140–146 (LCMDYYN) is wnt-binding. Asn-146 is a glycosylation site (N-linked (GlcNAc...) asparagine). The interval 151-189 (TTAAPSHPEPPKPPARSVPKGRTRVEPPRSRSRATGCES) is disordered. Pro residues predominate over residues 157-166 (HPEPPKPPAR). The helical transmembrane segment at 240 to 260 (IGLWSVLCFASTFATVSTFLI) threads the bilayer. Over 261–271 (DMERFKYPERP) the chain is Cytoplasmic. The helical transmembrane segment at 272–292 (IIFLSACYLLVSTGYLIRLIA) threads the bilayer. Over 293-320 (GHEKVACSRGELDLEHIIHYETTGPALC) the chain is Extracellular. A helical membrane pass occupies residues 321–341 (TLVFLLIYFFGMASSIWWVIL). The Cytoplasmic segment spans residues 342–377 (SLTWFLAAGMKWGNEAIAGYSQYFHLAAWLVPSIKS). A helical transmembrane segment spans residues 378–398 (IAVLALSSVDGDPVAGICFVG). At 399-407 (NQNLDNLRG) the chain is on the extracellular side. Residues 408-428 (FVLAPLVIYLFIGSMFLLAGF) form a helical membrane-spanning segment. The Cytoplasmic segment spans residues 429–454 (VSLFRIRSVIKQGGTKTDKLEKLMIR). The chain crosses the membrane as a helical span at residues 455-475 (IGIFSVLYTVPATIVVACFFY). At 476–505 (EQHNRQGWEVAHNCNSCQPEMAQPHRPDYA) the chain is on the extracellular side. The chain crosses the membrane as a helical span at residues 506 to 526 (VFMLKYFMCLVVGITSGVWIW). Residues 527–581 (SGKTLESWRAFCTRCCWGSKATGGSMYSDVSTGLTWRSGTGSSVSCPKQMPLSQV) lie on the Cytoplasmic side of the membrane. Residues 529-534 (KTLESW) carry the Lys-Thr-X-X-X-Trp motif, mediates interaction with the PDZ domain of Dvl family members motif. Positions 579–581 (SQV) match the PDZ-binding motif.

It belongs to the G-protein coupled receptor Fz/Smo family. Interacts with lypd6 and the interaction is strongly enhanced by wnt3a.

It is found in the membrane. The protein resides in the cell membrane. In terms of biological role, receptor for Wnt proteins. Most of frizzled receptors are coupled to the beta-catenin canonical signaling pathway, which leads to the activation of disheveled proteins, inhibition of GSK-3 kinase, nuclear accumulation of beta-catenin and activation of Wnt target genes. A second signaling pathway involving PKC and calcium fluxes has been seen for some family members, but it is not yet clear if it represents a distinct pathway or if it can be integrated in the canonical pathway, as PKC seems to be required for Wnt-mediated inactivation of GSK-3 kinase. Both pathways seem to involve interactions with G-proteins. May be involved in transduction and intercellular transmission of polarity information during tissue morphogenesis and/or in differentiated tissues. Activation by Wnt8, Wnt5A or Wnt3A induces expression of beta-catenin target genes. Displays an axis-inducing activity. The polypeptide is Frizzled-8 (fzd8) (Xenopus laevis (African clawed frog)).